The sequence spans 228 residues: Cytidylate kinase (228 aa).

An ATP-binding site is contributed by Gly12–Thr20.

This sequence belongs to the cytidylate kinase family. Type 1 subfamily.

Its subcellular location is the cytoplasm. The catalysed reaction is CMP + ATP = CDP + ADP. It carries out the reaction dCMP + ATP = dCDP + ADP. The chain is Cytidylate kinase from Photobacterium profundum (strain SS9).